The chain runs to 473 residues: Cysteine--tRNA ligase (473 aa).

Cysteine 28 is a binding site for Zn(2+). A 'HIGH' region motif is present at residues 30 to 40 (MTVYDYCHLGH). Zn(2+) is bound by residues cysteine 209, histidine 234, and glutamate 238. A 'KMSKS' region motif is present at residues 282 to 286 (KMSKS). ATP is bound at residue lysine 285.

The protein belongs to the class-I aminoacyl-tRNA synthetase family. In terms of assembly, monomer. Zn(2+) is required as a cofactor.

The protein localises to the cytoplasm. It catalyses the reaction tRNA(Cys) + L-cysteine + ATP = L-cysteinyl-tRNA(Cys) + AMP + diphosphate. In Neisseria meningitidis serogroup B (strain ATCC BAA-335 / MC58), this protein is Cysteine--tRNA ligase.